A 154-amino-acid chain; its full sequence is Probable biofilm-surface layer protein B (154 aa).

The signal sequence occupies residues 1 to 30 (MLKRTSFVSSLFISSAVLLSILLPSGQAHA).

Belongs to the BslA/BslB family. As to quaternary structure, monomer in vitro.

The protein resides in the secreted. In terms of biological role, has a minor role in biofilm architecture. May contribute to the surface hydrophobicity. This chain is Probable biofilm-surface layer protein B, found in Bacillus subtilis (strain 168).